A 162-amino-acid chain; its full sequence is Class I hydrophobin 3 (162 aa).

Disulfide bonds link Cys-36/Cys-150 and Cys-151/Cys-159.

Belongs to the fungal hydrophobin family. Self-assembles to form functional amyloid fibrils called rodlets. Self-assembly into fibrillar rodlets occurs spontaneously at hydrophobic:hydrophilic interfaces and the rodlets further associate laterally to form amphipathic monolayers.

Its subcellular location is the secreted. The protein localises to the cell wall. Aerial growth, conidiation, and dispersal of filamentous fungi in the environment rely upon a capability of their secreting small amphipathic proteins called hydrophobins (HPBs) with low sequence identity. Class I can self-assemble into an outermost layer of rodlet bundles on aerial cell surfaces, conferring cellular hydrophobicity that supports fungal growth, development and dispersal; whereas Class II form highly ordered films at water-air interfaces through intermolecular interactions but contribute nothing to the rodlet structure. This is Class I hydrophobin 3 from Coprinopsis cinerea (strain Okayama-7 / 130 / ATCC MYA-4618 / FGSC 9003) (Inky cap fungus).